Consider the following 1758-residue polypeptide: uncharacterized protein (1758 aa).

Residues 1–12 (MCFFLGSRLAYA) form the signal peptide. The region spanning 1465–1758 (ENLYNNGMWI…SFILGGNYYF (294 aa)) is the Autotransporter domain.

The protein resides in the cell outer membrane. This is an uncharacterized protein from Escherichia coli (strain K12).